The following is a 493-amino-acid chain: MNQKQLTKLRTMVPEMKRVRHIHFIGIGGAGMGGIAEVLANEGYKITGSDLAENVVTQQLSHLGICIFFHHHRDNVKNASVVVVSSAIPEDNPEILAAHEARIPVIQRAEMLAELMRFRHGIAIAGTHGKTTTTAMVASIYAQAGLDPTFVNGGLIKAAGKHAQLGSSRYLIVEADESDASFIHLQPLVAIVTNIEADHMDTYQGNFEHLKQTFINFLHNLPFYGRAILCIDDQVIRTLLPRIARHITTYGFSEDADIKITGYEQKEFTSYFMLERVHKPILKIQLNAPGRHNALNAAAAVAVATEEGVEDEHILQALSFFQGTGRRFDCLGIFPLQPVNGQQGEVMLIDDYGHHPTEVAATIKAARVGWPTKRLVMIFQPHRYSRTRDLYDDFVNVLSQVDILLMLEIYSAGESPIPDISSCALCDSIRDFSHRMPILVTDHEKLPSLLAKQLKENDMVLVQGAGNIGKVARTLAECELKVPPLIQKESHYA.

126-132 (GTHGKTT) contacts ATP.

Belongs to the MurCDEF family.

The protein localises to the cytoplasm. The catalysed reaction is UDP-N-acetyl-alpha-D-muramate + L-alanine + ATP = UDP-N-acetyl-alpha-D-muramoyl-L-alanine + ADP + phosphate + H(+). It functions in the pathway cell wall biogenesis; peptidoglycan biosynthesis. Its function is as follows. Cell wall formation. This is UDP-N-acetylmuramate--L-alanine ligase from Hamiltonella defensa subsp. Acyrthosiphon pisum (strain 5AT).